The following is a 383-amino-acid chain: Putative glutamate--cysteine ligase 2-1 (383 aa).

It belongs to the glutamate--cysteine ligase type 2 family. YbdK subfamily.

The catalysed reaction is L-cysteine + L-glutamate + ATP = gamma-L-glutamyl-L-cysteine + ADP + phosphate + H(+). Its function is as follows. ATP-dependent carboxylate-amine ligase which exhibits weak glutamate--cysteine ligase activity. The sequence is that of Putative glutamate--cysteine ligase 2-1 from Arthrobacter sp. (strain FB24).